The sequence spans 83 residues: Sulfur carrier protein TusA (83 aa).

Residue Cys19 is the Cysteine persulfide intermediate of the active site.

It belongs to the sulfur carrier protein TusA family.

The protein localises to the cytoplasm. Sulfur carrier protein which probably makes part of a sulfur-relay system. This Aliivibrio fischeri (strain ATCC 700601 / ES114) (Vibrio fischeri) protein is Sulfur carrier protein TusA.